We begin with the raw amino-acid sequence, 215 residues long: MQRGKFITFEGIDGAGKSTHLAWLASFLRDKGLEVIVTREPGSTALGEQLRQLLLDHRQAMHAETETLLMFAARREHLDKVILPALERGAWVISDRFTDASFAYQGGGRGVPSARLEILEQWVQKGFSPDLTVYFDVPVTISRQRVQSARTADRFELEPDLFFERVRQAYLQRAKQFSERIRVVDGSLSLEEVRTAMVEVVEKFWSAQASSGYRM.

11 to 18 lines the ATP pocket; it reads GIDGAGKS.

This sequence belongs to the thymidylate kinase family.

It carries out the reaction dTMP + ATP = dTDP + ADP. Its function is as follows. Phosphorylation of dTMP to form dTDP in both de novo and salvage pathways of dTTP synthesis. The polypeptide is Thymidylate kinase (Nitrosomonas eutropha (strain DSM 101675 / C91 / Nm57)).